Consider the following 262-residue polypeptide: Hydroxyacylglutathione hydrolase (262 aa).

Residues His-53, His-55, Asp-57, His-58, His-111, Asp-128, and His-166 each coordinate Zn(2+).

Belongs to the metallo-beta-lactamase superfamily. Glyoxalase II family. As to quaternary structure, monomer. Zn(2+) serves as cofactor.

The catalysed reaction is an S-(2-hydroxyacyl)glutathione + H2O = a 2-hydroxy carboxylate + glutathione + H(+). It functions in the pathway secondary metabolite metabolism; methylglyoxal degradation; (R)-lactate from methylglyoxal: step 2/2. Functionally, thiolesterase that catalyzes the hydrolysis of S-D-lactoyl-glutathione to form glutathione and D-lactic acid. The sequence is that of Hydroxyacylglutathione hydrolase from Nitrosomonas europaea (strain ATCC 19718 / CIP 103999 / KCTC 2705 / NBRC 14298).